The chain runs to 947 residues: Ionotropic receptor 25a (947 aa).

A signal peptide spans 1–30 (MILMNPKTSKILWLLGFLSLLSSFSLEIAA). Residues 31–562 (QTTQNINVLF…SLFKFLTVLE (532 aa)) are Extracellular-facing. 4 N-linked (GlcNAc...) asparagine glycosylation sites follow: Asn-78, Asn-177, Asn-277, and Asn-434. A helical transmembrane segment spans residues 563–583 (TNVWLCILAAYFFTSFLMWIF). Over 584–641 (DRWSPYSYQNNREKYKDDEEKREFNLKECLWFCMTSLTPQGGGEAPKNLSGRLVAATW) the chain is Cytoplasmic. The helical transmembrane segment at 642–662 (WLFGFIIIASYTANLAAFLTV) threads the bilayer. The Extracellular segment spans residues 663 to 858 (SRLDTPVESL…DQSDGISIQN (196 aa)). N-linked (GlcNAc...) asparagine glycans are attached at residues Asn-687, Asn-715, and Asn-762. The chain crosses the membrane as a helical span at residues 859–879 (IGGVFIVIFVGIGMACITLVF). Residues 880-947 (EYWWYRYRKN…QYPATFKPRF (68 aa)) are Cytoplasmic-facing.

It belongs to the glutamate-gated ion channel (TC 1.A.10.1) family. Interacts with nocte. As to expression, in the antenna, detected in neurons of the arista and also detected in sacculus neurons which innervate the first and second chambers (at protein level). Throughout the main body of the antenna, expressed in neurons which innervate the coeloconic class of olfactory sensilla (at protein level). Expressed in multiple cells of the dorsal organ including the dorsal organ cool cells (at protein level). Detected in femur and retina. Expressed in a subset of femur chordonotal neurons and antennal Johnston's Organ neurons.

It localises to the cell membrane. Its subcellular location is the cell projection. The protein localises to the axon. The protein resides in the dendrite. It is found in the perikaryon. It localises to the cilium. Its function is as follows. Integral part of various neural sensory systems in the antenna that provide the neural basis for the response to environmental changes in temperature (thermosensation), humidity (hygrosensation) and odor detection. Required for odor-evoked electrophysiological responses in multiple neuron classes in the antenna and is likely to function as part of an olfactory receptor complex with Ir76a and Ir76b. Together with Ir21a and Ir93a, mediates the response of the larval dorsal organ cool cells, a trio of cool-responsive neurons, to cooling and is required for cool avoidance behavior. Required in chordonotal organ neurons for behavioral synchronization to low-amplitude temperature cycles and mediates circadian clock resetting by temperature. Together with Ir40a and Ir93a, mediates the response of the hydrosensory sacculus neurons to changes in relative humidity, and is required for dry detection and humidiy preference behavior. This chain is Ionotropic receptor 25a, found in Drosophila melanogaster (Fruit fly).